Reading from the N-terminus, the 824-residue chain is Lon protease (824 aa).

Residues 1-23 (MNEPMSLFDDLPEEHDEPQEAPE) are disordered. Acidic residues predominate over residues 10 to 20 (DLPEEHDEPQE). In terms of domain architecture, Lon N-terminal spans 26-222 (LPMVVLGEMV…KVYLVLARQL (197 aa)). ATP is bound at residue 375-382 (GPPGVGKT). Residues 617 to 798 (QDEVGVATGV…DEVLRIALSR (182 aa)) form the Lon proteolytic domain. Catalysis depends on residues Ser-704 and Lys-747. Residues 800–824 (PTPANNQNGSHTNNRGQPSPAPAGT) are disordered. Polar residues predominate over residues 802 to 816 (PANNQNGSHTNNRGQ).

The protein belongs to the peptidase S16 family. As to quaternary structure, homohexamer. Organized in a ring with a central cavity.

The protein resides in the cytoplasm. The catalysed reaction is Hydrolysis of proteins in presence of ATP.. In terms of biological role, ATP-dependent serine protease that mediates the selective degradation of mutant and abnormal proteins as well as certain short-lived regulatory proteins. Required for cellular homeostasis and for survival from DNA damage and developmental changes induced by stress. Degrades polypeptides processively to yield small peptide fragments that are 5 to 10 amino acids long. Binds to DNA in a double-stranded, site-specific manner. The sequence is that of Lon protease from Chloroflexus aggregans (strain MD-66 / DSM 9485).